The chain runs to 313 residues: Probable RuBisCO transcriptional regulator (313 aa).

The HTH lysR-type domain maps to 6 to 63; that stretch reads FTLDQLLILKAIAAQGSFKKAADSLYISQPAVSMQVQNIEKQLNVQLLDRGGRRANLT. The H-T-H motif DNA-binding region spans 23–42; it reads FKKAADSLYISQPAVSMQVQ.

It belongs to the LysR transcriptional regulatory family.

It is found in the plastid. It localises to the chloroplast. In terms of biological role, trans-acting transcriptional regulator of RuBisCO genes (rbcL and rbcS) expression. This chain is Probable RuBisCO transcriptional regulator (rbcR), found in Chlorokybus atmophyticus (Soil alga).